The following is a 246-amino-acid chain: NAD-dependent protein deacetylase (246 aa).

Residues 1–246 (MKMKEFLDLL…RRVMEEGGIS (246 aa)) enclose the Deacetylase sirtuin-type domain. NAD(+) is bound by residues A22, T26, F33, R34, Q98, I100, D101, and H116. F33 provides a ligand contact to nicotinamide. Positions 100 and 101 each coordinate nicotinamide. H116 functions as the Proton acceptor in the catalytic mechanism. Residues C124, C127, C148, and C151 each coordinate Zn(2+). Residues S189, S190, N214, L215, G216, D231, and V232 each contribute to the NAD(+) site.

This sequence belongs to the sirtuin family. Class U subfamily. Zn(2+) is required as a cofactor.

Its subcellular location is the cytoplasm. The catalysed reaction is N(6)-acetyl-L-lysyl-[protein] + NAD(+) + H2O = 2''-O-acetyl-ADP-D-ribose + nicotinamide + L-lysyl-[protein]. Its activity is regulated as follows. Non-competitively inhibited by nicotinamide in vitro and in vivo, but not by nicotinic acid. Nicotinamide inhibits the deacetylation activity by reacting with a reaction intermediate. Its function is as follows. NAD-dependent protein deacetylase which modulates the activities of several enzymes which are inactive in their acetylated form. Also has depropionylation activity in vitro. Also able to ADP-ribosylate peptide substrates with Arg or Lys in the +2 position. The role of this function in vivo is not clear. This is NAD-dependent protein deacetylase from Thermotoga maritima (strain ATCC 43589 / DSM 3109 / JCM 10099 / NBRC 100826 / MSB8).